A 408-amino-acid chain; its full sequence is Succinylornithine transaminase (408 aa).

K252 bears the N6-(pyridoxal phosphate)lysine mark.

The protein belongs to the class-III pyridoxal-phosphate-dependent aminotransferase family. AstC subfamily. The cofactor is pyridoxal 5'-phosphate.

It carries out the reaction N(2)-succinyl-L-ornithine + 2-oxoglutarate = N-succinyl-L-glutamate 5-semialdehyde + L-glutamate. It functions in the pathway amino-acid degradation; L-arginine degradation via AST pathway; L-glutamate and succinate from L-arginine: step 3/5. In terms of biological role, catalyzes the transamination of N(2)-succinylornithine and alpha-ketoglutarate into N(2)-succinylglutamate semialdehyde and glutamate. Can also act as an acetylornithine aminotransferase. This chain is Succinylornithine transaminase, found in Salmonella agona (strain SL483).